We begin with the raw amino-acid sequence, 134 residues long: MAEVIGYYGTGRRKTAVARVYLRPGEGKVKVNGKEYESLNDYFKNPAWTKHAIEPLEVTNTLGKFDLVIRVNGGGLSGQSGAVRLGIARALLQYDQNLRPVLKKYKMLTRDPREVERKKYGLKKARRAPQFSKR.

The tract at residues 114–134 (EVERKKYGLKKARRAPQFSKR) is disordered. A compositionally biased stretch (basic residues) spans 120–134 (YGLKKARRAPQFSKR).

The protein belongs to the universal ribosomal protein uS9 family.

The sequence is that of Small ribosomal subunit protein uS9 from Thermotoga sp. (strain RQ2).